Consider the following 576-residue polypeptide: Vesicular glutamate transporter 1 (576 aa).

Topologically, residues 1–63 are cytoplasmic; it reads MEFRKEEFKK…CTCFGLPRRY (63 aa). A helical membrane pass occupies residues 64–84; the sequence is IIAIMSGLGFCISFGIRCNLG. At 85–116 the chain is on the vesicular side; the sequence is VAIVSMVNNNTVYKGNKIVIEQAQFTWDPETV. An N-linked (GlcNAc...) asparagine glycan is attached at asparagine 93. A helical membrane pass occupies residues 117-137; sequence GMIHGSFFWGYIVTQIPGGYI. Residues 138–140 are Cytoplasmic-facing; that stretch reads CQK. The helical transmembrane segment at 141–161 threads the bilayer; sequence FAANRVFGFAIVATSTLNMLI. Over 162-168 the chain is Vesicular; the sequence is PSAARVH. Residues 169-189 form a helical membrane-spanning segment; the sequence is FACVICVRILQGLVEGVTYPA. The Cytoplasmic segment spans residues 190–208; it reads CHGIWSKWAPPLERSRLAT. The chain crosses the membrane as a helical span at residues 209–229; that stretch reads TAFCGSYAGAVVAMPLAGVLV. The Vesicular segment spans residues 230-236; sequence QYSGWSS. Residues 237–257 form a helical membrane-spanning segment; sequence VFYVYGSFGIMWYMFWILVSY. Topologically, residues 258–302 are cytoplasmic; sequence ESPAIHPTISEEEKKYIEESIGESTGLMNPMAKFKAPWRKFFTSM. A helical membrane pass occupies residues 303-323; the sequence is PVYAIIVANFCRSWTFYLLLI. Topologically, residues 324–341 are vesicular; the sequence is SQPAYFEEVFGFEISKVG. A helical transmembrane segment spans residues 342–362; it reads LLSALPHLVMTIIVPIGGQIA. Residues 363 to 378 lie on the Cytoplasmic side of the membrane; it reads DFLRTKRIMSTTNVRK. A helical transmembrane segment spans residues 379–399; it reads MMNCGGFGMEATLLLVVGYSH. The Vesicular segment spans residues 400-401; that stretch reads SR. A helical transmembrane segment spans residues 402–422; it reads GVAISFLVLAVGFSGFAISGF. At 423-435 the chain is on the cytoplasmic side; sequence NVNHLDIAPRYAS. The helical transmembrane segment at 436–456 threads the bilayer; the sequence is ILMGISNGVGTLSGMVCPLIV. The Vesicular segment spans residues 457–469; it reads GAMTKHKTREEWQ. A helical membrane pass occupies residues 470 to 490; that stretch reads YVFLIASLVHYGGVLFYGIFA. Residues 491-576 lie on the Cytoplasmic side of the membrane; the sequence is SGEKQPWAEP…YGTVAERDLS (86 aa). Residues 517–547 are disordered; that stretch reads ADESEEQSQAYGAYGSYGATQTTSQQNGGWT. The segment covering 534–545 has biased composition (polar residues); it reads GATQTTSQQNGG.

It belongs to the major facilitator superfamily. Sodium/anion cotransporter family. VGLUT subfamily.

It localises to the cytoplasmic vesicle. Its subcellular location is the secretory vesicle. It is found in the synaptic vesicle membrane. The protein resides in the cell membrane. The protein localises to the synapse. It localises to the synaptosome. It catalyses the reaction L-glutamate(out) = L-glutamate(in). The enzyme catalyses chloride(in) = chloride(out). The catalysed reaction is 3 Na(+)(out) + phosphate(out) = 3 Na(+)(in) + phosphate(in). It carries out the reaction phosphate(in) = phosphate(out). It catalyses the reaction K(+)(in) + H(+)(out) = K(+)(out) + H(+)(in). Chloride channel activity is allosterically activated by lumenal H(+) and Cl(-) leading to synaptic vesicles acidification. The L-glutamate transport activity is allosterically activated by lumenal H(+) and Cl(-). The allosteric activation by H(+) efficiently prevents non-vesicular efflux across the plasma membrane, thereby restricting L-glutamate transport activity to acidic membranes such as synaptic vesicles. In terms of biological role, multifunctional transporter that transports L-glutamate as well as multiple ions such as chloride, proton, potassium, sodium and phosphate. At the synaptic vesicle membrane, mainly functions as an uniporter which transports preferentially L-glutamate but also phosphate from the cytoplasm into synaptic vesicles at presynaptic nerve terminals of excitatory neural cells. The L-glutamate or phosphate uniporter activity is electrogenic and is driven by the proton electrochemical gradient, mainly by the electrical gradient established by the vacuolar H(+)-ATPase across the synaptic vesicle membrane. In addition, functions as a chloride channel that allows a chloride permeation through the synaptic vesicle membrane that affects the proton electrochemical gradient and promotes synaptic vesicles acidification. Moreover, may function as a K(+)/H(+) antiport allowing to maintain the electrical gradient and to decrease chemical gradient and therefore sustain vesicular glutamate uptake. The vesicular K(+)/H(+) antiport activity is electroneutral. At the plasma membrane, following exocytosis, functions as a symporter of Na(+) and phosphate from the extracellular space to the cytoplasm allowing synaptic phosphate homeostasis regulation. The symporter activity is driven by an inside negative membrane potential and is electrogenic. Is necessary for synaptic signaling of visual-evoked responses from photoreceptors. The polypeptide is Vesicular glutamate transporter 1 (Xenopus tropicalis (Western clawed frog)).